The primary structure comprises 252 residues: MRFDVITLFPEFLAQSAGLGVVGRAREKGLFSLHGWNPRDYAEGNYRRVDDRPFGGGPGMVMLIEPLQACLQAIRDADPTPARVIHLSPQGAPLTQAKVRELAALPRMVLLCGRYEGIDERFLEANVDEEISLGDYVLSGGELGAAVIIDAVARLQDGALNDAESAAQDSFEGDLGLLDCPHYSQPAQHPLGDVPEVLRSGNHAAIAAWRRQQSLVRTAQRRPDLLDEQALGKADRKLLDQARQAQKQKASP.

Residues glycine 113 and 133–138 (LGDYVL) contribute to the S-adenosyl-L-methionine site.

The protein belongs to the RNA methyltransferase TrmD family. Homodimer.

The protein resides in the cytoplasm. The catalysed reaction is guanosine(37) in tRNA + S-adenosyl-L-methionine = N(1)-methylguanosine(37) in tRNA + S-adenosyl-L-homocysteine + H(+). In terms of biological role, specifically methylates guanosine-37 in various tRNAs. The protein is tRNA (guanine-N(1)-)-methyltransferase of Stenotrophomonas maltophilia (strain R551-3).